The sequence spans 563 residues: GTPase Obg (563 aa).

One can recognise an Obg domain in the interval 2 to 168 (SDFVDRVTVH…RDVILELKSI (167 aa)). The 181-residue stretch at 169 to 349 (ADVALVGFPS…LNFALSALVH (181 aa)) folds into the OBG-type G domain. GTP-binding positions include 175 to 182 (GFPSAGKS), 200 to 204 (FTTLV), 221 to 224 (DVPG), 301 to 304 (NKID), and 330 to 332 (STA). The Mg(2+) site is built by Ser182 and Thr202. In terms of domain architecture, OCT spans 383-469 (DEGGSALEFT…ARMVEFDWDP (87 aa)). Positions 529 to 563 (RKAGHWADPTVDDDRHDETSLFGHGESSEDGETEE) are disordered.

The protein belongs to the TRAFAC class OBG-HflX-like GTPase superfamily. OBG GTPase family. In terms of assembly, monomer. The cofactor is Mg(2+).

It localises to the cytoplasm. Functionally, an essential GTPase which binds GTP, GDP and possibly (p)ppGpp with moderate affinity, with high nucleotide exchange rates and a fairly low GTP hydrolysis rate. Plays a role in control of the cell cycle, stress response, ribosome biogenesis and in those bacteria that undergo differentiation, in morphogenesis control. The chain is GTPase Obg from Bifidobacterium longum (strain DJO10A).